A 122-amino-acid polypeptide reads, in one-letter code: S-adenosylmethionine decarboxylase proenzyme (122 aa).

S63 serves as the catalytic Schiff-base intermediate with substrate; via pyruvic acid. S63 carries the pyruvic acid (Ser); by autocatalysis modification. The active-site Proton acceptor; for processing activity is the H68. C83 acts as the Proton donor; for catalytic activity in catalysis.

It belongs to the prokaryotic AdoMetDC family. Type 1 subfamily. As to quaternary structure, heterotetramer of two alpha and two beta chains arranged as a dimer of alpha/beta heterodimers. Pyruvate serves as cofactor. Is synthesized initially as an inactive proenzyme. Formation of the active enzyme involves a self-maturation process in which the active site pyruvoyl group is generated from an internal serine residue via an autocatalytic post-translational modification. Two non-identical subunits are generated from the proenzyme in this reaction, and the pyruvate is formed at the N-terminus of the alpha chain, which is derived from the carboxyl end of the proenzyme. The post-translation cleavage follows an unusual pathway, termed non-hydrolytic serinolysis, in which the side chain hydroxyl group of the serine supplies its oxygen atom to form the C-terminus of the beta chain, while the remainder of the serine residue undergoes an oxidative deamination to produce ammonia and the pyruvoyl group blocking the N-terminus of the alpha chain.

It catalyses the reaction S-adenosyl-L-methionine + H(+) = S-adenosyl 3-(methylsulfanyl)propylamine + CO2. Its pathway is amine and polyamine biosynthesis; S-adenosylmethioninamine biosynthesis; S-adenosylmethioninamine from S-adenosyl-L-methionine: step 1/1. In terms of biological role, catalyzes the decarboxylation of S-adenosylmethionine to S-adenosylmethioninamine (dcAdoMet), the propylamine donor required for the synthesis of the polyamines spermine and spermidine from the diamine putrescine. The chain is S-adenosylmethionine decarboxylase proenzyme from Methanococcus maripaludis (strain C5 / ATCC BAA-1333).